The chain runs to 406 residues: MSYEKLLERFLTYVKINTRSNPNSTQTPTTQSQVDFALTVLKPEMEAIGLKDVHYLPSNGYLVGTLPATSDRLRHKIGFISHMDTADFNAENITPQIVDYKGGDIELGDSGYILSPKDFPNLNNYHGQTLITTDGKTLLGADDKSGIAEIMTAMEYLASHPEIEHCEIRVGFGPDEEIGIGADKFDVKDFDVDFAYTVDGGPLGELQYETFSAAGLELTFEGRNVHPGTAKNQMINALQLAMDFHSQLPENERPEQTDDYQGFYHLYDLSGTVDQAKSSYIIRDFEEVDFLKRKQLAQDIADNMNEALQSERVKVKLYDQYYNMKKVIEKDMTPINIAKEVMEELDIKPIIEPIRGGTDGSKISFMGIPTPNLFAGGENMHGRFEFVSLQTMEKAVDVILGIVAKD.

Residue His82 participates in Zn(2+) binding. Residue Asp84 is part of the active site. Residue Asp142 participates in Zn(2+) binding. Glu176 serves as the catalytic Proton acceptor. Residues Glu177, Asp199, and His381 each coordinate Zn(2+).

The protein belongs to the peptidase M20B family. Zn(2+) is required as a cofactor.

It localises to the cytoplasm. It carries out the reaction Release of the N-terminal residue from a tripeptide.. Its function is as follows. Cleaves the N-terminal amino acid of tripeptides. The chain is Peptidase T from Streptococcus agalactiae serotype Ia (strain ATCC 27591 / A909 / CDC SS700).